The chain runs to 490 residues: Betaine aldehyde dehydrogenase (490 aa).

K(+) contacts are provided by Thr-26, Ile-27, and Asp-93. 150-152 (GAW) contacts NAD(+). Lys-162 functions as the Charge relay system in the catalytic mechanism. NAD(+) is bound at residue 176–179 (KPSE). Val-180 contributes to the K(+) binding site. 230 to 233 (GTST) is a binding site for NAD(+). Leu-246 contributes to the K(+) binding site. Glu-252 functions as the Proton acceptor in the catalytic mechanism. Positions 254, 286, and 387 each coordinate NAD(+). Residue Cys-286 is the Nucleophile of the active site. Cysteine sulfenic acid (-SOH) is present on Cys-286. Residues Lys-457 and Gly-460 each coordinate K(+). Glu-464 serves as the catalytic Charge relay system.

It belongs to the aldehyde dehydrogenase family. As to quaternary structure, dimer of dimers. The cofactor is K(+).

It carries out the reaction betaine aldehyde + NAD(+) + H2O = glycine betaine + NADH + 2 H(+). It functions in the pathway amine and polyamine biosynthesis; betaine biosynthesis via choline pathway; betaine from betaine aldehyde: step 1/1. In terms of biological role, involved in the biosynthesis of the osmoprotectant glycine betaine. Catalyzes the irreversible oxidation of betaine aldehyde to the corresponding acid. The protein is Betaine aldehyde dehydrogenase of Pseudomonas paraeruginosa (strain DSM 24068 / PA7) (Pseudomonas aeruginosa (strain PA7)).